The primary structure comprises 126 residues: UPF0538 protein C2orf76 (126 aa).

It belongs to the UPF0538 family.

The chain is UPF0538 protein C2orf76 (C2orf76) from Homo sapiens (Human).